The following is a 204-amino-acid chain: uncharacterized protein (204 aa).

This is an uncharacterized protein from Caenorhabditis elegans.